A 109-amino-acid polypeptide reads, in one-letter code: Protein reprimo (109 aa).

Asn-7 and Asn-18 each carry an N-linked (GlcNAc...) asparagine glycan. A helical transmembrane segment spans residues 56–76 (VVQIAVMCVLSLTVVFGIFFL). Ser-98 carries the phosphoserine modification.

Belongs to the reprimo family.

The protein localises to the cytoplasm. It is found in the membrane. May be involved in the regulation of p53-dependent G2 arrest of the cell cycle. Seems to induce cell cycle arrest by inhibiting CDK1 activity and nuclear translocation of the CDC2 cyclin B1 complex. This is Protein reprimo (RPRM) from Bos taurus (Bovine).